The chain runs to 210 residues: Putative protein-lysine deacylase ABHD14B (210 aa).

The residue at position 91 (S91) is a Phosphoserine. Residues S111, D162, and H188 each act as charge relay system in the active site.

The protein belongs to the AB hydrolase superfamily. ABHD14 family. In terms of assembly, may interact with TAF1.

The protein localises to the cytoplasm. Its subcellular location is the nucleus. It carries out the reaction L-lysyl-[protein] + acetyl-CoA = N(6)-acetyl-L-lysyl-[protein] + CoA + H(+). In terms of biological role, acts as an atypical protein-lysine deacetylase in vitro. Catalyzes the deacetylation of lysine residues using CoA as substrate, generating acetyl-CoA and the free amine of protein-lysine residues. Additional experiments are however required to confirm the protein-lysine deacetylase activity in vivo. Has hydrolase activity towards various surrogate p-nitrophenyl (pNp) substrates, such as pNp-butyrate, pNp-acetate and pNp-octanoate in vitro, with a strong preference for pNp-acetate. May activate transcription. The chain is Putative protein-lysine deacylase ABHD14B from Rattus norvegicus (Rat).